Consider the following 517-residue polypeptide: Cobyric acid synthase (517 aa).

The GATase cobBQ-type domain maps to E253–L453. Residue C334 is the Nucleophile of the active site. H445 is a catalytic residue.

It belongs to the CobB/CobQ family. CobQ subfamily.

It functions in the pathway cofactor biosynthesis; adenosylcobalamin biosynthesis. Catalyzes amidations at positions B, D, E, and G on adenosylcobyrinic A,C-diamide. NH(2) groups are provided by glutamine, and one molecule of ATP is hydrogenolyzed for each amidation. In Moorella thermoacetica (strain ATCC 39073 / JCM 9320), this protein is Cobyric acid synthase.